Here is a 206-residue protein sequence, read N- to C-terminus: Guanylate kinase (206 aa).

The Guanylate kinase-like domain occupies 5-183; sequence GNLFVVAAPS…AVFDLKTIVH (179 aa). Residue 12–19 participates in ATP binding; it reads APSGAGKS.

It belongs to the guanylate kinase family.

The protein resides in the cytoplasm. The enzyme catalyses GMP + ATP = GDP + ADP. Functionally, essential for recycling GMP and indirectly, cGMP. The polypeptide is Guanylate kinase (Polaromonas sp. (strain JS666 / ATCC BAA-500)).